The following is a 266-amino-acid chain: Ribonuclease HII (266 aa).

The RNase H type-2 domain occupies 73-266 (SPVAGVDEAG…NCGSRQKCEG (194 aa)). 3 residues coordinate a divalent metal cation: Asp79, Glu80, and Asp173.

The protein belongs to the RNase HII family. The cofactor is Mn(2+). Mg(2+) serves as cofactor.

Its subcellular location is the cytoplasm. The enzyme catalyses Endonucleolytic cleavage to 5'-phosphomonoester.. Its function is as follows. Endonuclease that specifically degrades the RNA of RNA-DNA hybrids. The protein is Ribonuclease HII of Pelotomaculum thermopropionicum (strain DSM 13744 / JCM 10971 / SI).